Here is a 357-residue protein sequence, read N- to C-terminus: tRNA-specific 2-thiouridylase MnmA (357 aa).

ATP is bound by residues 7-14 (GLSGGVDS) and leucine 33. The active-site Nucleophile is the cysteine 94. Cysteine 94 and cysteine 193 are oxidised to a cystine. Glycine 119 is a binding site for ATP. Residues 143–145 (KDQ) are interaction with tRNA. Catalysis depends on cysteine 193, which acts as the Cysteine persulfide intermediate. The interval 298–299 (RY) is interaction with tRNA.

The protein belongs to the MnmA/TRMU family.

Its subcellular location is the cytoplasm. The catalysed reaction is S-sulfanyl-L-cysteinyl-[protein] + uridine(34) in tRNA + AH2 + ATP = 2-thiouridine(34) in tRNA + L-cysteinyl-[protein] + A + AMP + diphosphate + H(+). Functionally, catalyzes the 2-thiolation of uridine at the wobble position (U34) of tRNA, leading to the formation of s(2)U34. This Synechococcus sp. (strain ATCC 27144 / PCC 6301 / SAUG 1402/1) (Anacystis nidulans) protein is tRNA-specific 2-thiouridylase MnmA.